The primary structure comprises 476 residues: Ribulose bisphosphate carboxylase large chain (476 aa).

Residues 1–2 constitute a propeptide that is removed on maturation; sequence MS. Position 3 is an N-acetylproline (P3). K14 is modified (N6,N6,N6-trimethyllysine). Residues N123 and T173 each coordinate substrate. K175 acts as the Proton acceptor in catalysis. K177 serves as a coordination point for substrate. Mg(2+) contacts are provided by K201, D203, and E204. K201 is subject to N6-carboxylysine. H294 acts as the Proton acceptor in catalysis. Positions 295, 327, and 379 each coordinate substrate.

The protein belongs to the RuBisCO large chain family. Type I subfamily. In terms of assembly, heterohexadecamer of 8 large chains and 8 small chains; disulfide-linked. The disulfide link is formed within the large subunit homodimers. The cofactor is Mg(2+). Post-translationally, the disulfide bond which can form in the large chain dimeric partners within the hexadecamer appears to be associated with oxidative stress and protein turnover.

The protein resides in the plastid. It is found in the chloroplast. The catalysed reaction is 2 (2R)-3-phosphoglycerate + 2 H(+) = D-ribulose 1,5-bisphosphate + CO2 + H2O. It catalyses the reaction D-ribulose 1,5-bisphosphate + O2 = 2-phosphoglycolate + (2R)-3-phosphoglycerate + 2 H(+). Functionally, ruBisCO catalyzes two reactions: the carboxylation of D-ribulose 1,5-bisphosphate, the primary event in carbon dioxide fixation, as well as the oxidative fragmentation of the pentose substrate in the photorespiration process. Both reactions occur simultaneously and in competition at the same active site. This Sorghum bicolor (Sorghum) protein is Ribulose bisphosphate carboxylase large chain.